Consider the following 191-residue polypeptide: Sec-independent protein translocase protein TatB (191 aa).

A helical transmembrane segment spans residues 1 to 21 (MFDIGFSELFLILVIGLLVLG). A compositionally biased stretch (polar residues) spans 119 to 138 (ESTSQTLTEQLTPSEQVTEA). Disordered stretches follow at residues 119–139 (ESTS…TEAT) and 168–191 (DDDD…DKKA). The segment covering 181-191 (PQTEEIQDKKA) has biased composition (basic and acidic residues).

The protein belongs to the TatB family. In terms of assembly, the Tat system comprises two distinct complexes: a TatABC complex, containing multiple copies of TatA, TatB and TatC subunits, and a separate TatA complex, containing only TatA subunits. Substrates initially bind to the TatABC complex, which probably triggers association of the separate TatA complex to form the active translocon.

It localises to the cell inner membrane. In terms of biological role, part of the twin-arginine translocation (Tat) system that transports large folded proteins containing a characteristic twin-arginine motif in their signal peptide across membranes. Together with TatC, TatB is part of a receptor directly interacting with Tat signal peptides. TatB may form an oligomeric binding site that transiently accommodates folded Tat precursor proteins before their translocation. In Pasteurella multocida (strain Pm70), this protein is Sec-independent protein translocase protein TatB.